Consider the following 277-residue polypeptide: MGIRKYKPTSPGRRGGSVSTFAEITRSKPEKSLVRPLHSKGGRNGHGRITARHQGGGHKRAYRLIDFRRHDKDGIPAKVAHIEYDPNRTARIALLHYVDGEKRYILAPVGLKQGDRVENGPAADIKPGNCLPLRNIPTGTFVHAVELKPGGGAKLGRAAGAAIQLLAKEGAYATLRMPSGEMRQVEVACRATVGQVGNVEHANISWGKAGRMRWKGKRPSVRGVAMNPIDHPHGGGEGRTSGGRHPVSPWGKAEGRTRKKGKPSDRLIVRRRSKKKR.

2 disordered regions span residues 1–55 (MGIR…RHQG) and 217–277 (KRPS…KKKR). Positions 37 to 55 (LHSKGGRNGHGRITARHQG) are enriched in basic residues.

It belongs to the universal ribosomal protein uL2 family. In terms of assembly, part of the 50S ribosomal subunit. Forms a bridge to the 30S subunit in the 70S ribosome.

In terms of biological role, one of the primary rRNA binding proteins. Required for association of the 30S and 50S subunits to form the 70S ribosome, for tRNA binding and peptide bond formation. It has been suggested to have peptidyltransferase activity; this is somewhat controversial. Makes several contacts with the 16S rRNA in the 70S ribosome. The sequence is that of Large ribosomal subunit protein uL2 from Thermobifida fusca (strain YX).